The sequence spans 330 residues: Tryptophan--tRNA ligase (330 aa).

ATP contacts are provided by residues 10 to 12 and 18 to 19; these read QPS and GN. Positions 11 to 19 match the 'HIGH' region motif; it reads PSGTLTLGN. Asp133 serves as a coordination point for L-tryptophan. Residues 145-147, Ile184, and 193-197 each bind ATP; these read GED and KMSKS. Residues 193 to 197 carry the 'KMSKS' region motif; that stretch reads KMSKS.

This sequence belongs to the class-I aminoacyl-tRNA synthetase family. In terms of assembly, homodimer.

Its subcellular location is the cytoplasm. It carries out the reaction tRNA(Trp) + L-tryptophan + ATP = L-tryptophyl-tRNA(Trp) + AMP + diphosphate + H(+). Its function is as follows. Catalyzes the attachment of tryptophan to tRNA(Trp). The chain is Tryptophan--tRNA ligase from Halalkalibacterium halodurans (strain ATCC BAA-125 / DSM 18197 / FERM 7344 / JCM 9153 / C-125) (Bacillus halodurans).